Here is a 260-residue protein sequence, read N- to C-terminus: Ribosomal RNA small subunit methyltransferase G (260 aa).

The tract at residues 1–45 is disordered; it reads MKQRGPAGGRSSSPKPSAPGSGAGEGPDGRSAPASQKINKASAND. The segment covering 9-20 has biased composition (low complexity); that stretch reads GRSSSPKPSAPG. Positions 33–45 are enriched in polar residues; that stretch reads PASQKINKASAND. S-adenosyl-L-methionine contacts are provided by Gly-123, Phe-128, and Arg-193.

It belongs to the methyltransferase superfamily. RNA methyltransferase RsmG family.

The protein localises to the cytoplasm. The enzyme catalyses guanosine(527) in 16S rRNA + S-adenosyl-L-methionine = N(7)-methylguanosine(527) in 16S rRNA + S-adenosyl-L-homocysteine. Functionally, specifically methylates the N7 position of guanine in position 527 of 16S rRNA. The protein is Ribosomal RNA small subunit methyltransferase G of Bradyrhizobium diazoefficiens (strain JCM 10833 / BCRC 13528 / IAM 13628 / NBRC 14792 / USDA 110).